The chain runs to 132 residues: Putative RNase AF_2433 (132 aa).

Active-site residues include Arg90 and His95. The RX(4)HXY motif signature appears at 90–97 (RNWLVHRY). Residue Tyr97 is modified to O-di-AMP-tyrosine.

Belongs to the HepT RNase toxin family. Homodimer, probably forms a complex with cognate antitoxin AF_2432. Post-translationally, modified by cognate antitoxin AF_2432; probably at least 2 successive AMPylation events occur on Tyr-97.

Its function is as follows. Probable toxic component of a putative type VII toxin-antitoxin (TA) system, probably an RNase. Probably neutralized by cognate antitoxin AF_2432. Neutralization may be due to AMPylation by AF_2432. This chain is Putative RNase AF_2433, found in Archaeoglobus fulgidus (strain ATCC 49558 / DSM 4304 / JCM 9628 / NBRC 100126 / VC-16).